We begin with the raw amino-acid sequence, 226 residues long: Probable septum site-determining protein MinC (226 aa).

The protein belongs to the MinC family. In terms of assembly, interacts with MinD and FtsZ.

Functionally, cell division inhibitor that blocks the formation of polar Z ring septums. Rapidly oscillates between the poles of the cell to destabilize FtsZ filaments that have formed before they mature into polar Z rings. Prevents FtsZ polymerization. This Edwardsiella ictaluri (strain 93-146) protein is Probable septum site-determining protein MinC.